Here is a 345-residue protein sequence, read N- to C-terminus: D-amino-acid oxidase (345 aa).

Ser-10, Ile-13, Ser-49, Gly-53, and Asn-55 together coordinate FAD. Residues Tyr-230 and Arg-290 each contribute to the (R)-lactate site. Anthranilate is bound by residues Tyr-230 and Arg-290. 5 residues coordinate FAD: Arg-290, Ser-317, Gly-320, Tyr-321, and Gln-322. The Microbody targeting signal motif lies at Ala-343–Leu-345.

The protein belongs to the DAMOX/DASOX family. FAD serves as cofactor.

It is found in the peroxisome matrix. It carries out the reaction a D-alpha-amino acid + O2 + H2O = a 2-oxocarboxylate + H2O2 + NH4(+). It catalyses the reaction D-methionine + O2 + H2O = 4-methylsulfanyl-2-oxobutanoate + H2O2 + NH4(+). Its function is as follows. Catalyzes the oxidative deamination of D-amino acids with broad substrate specificity. Enables the organism to utilize D-amino acids as a source of nutrients. Enables the organism to utilize D-alanine as a nitrogen source, although it is not strictly required for this process. Also enables utilization of D-alanine as a carbon source. The chain is D-amino-acid oxidase from Candida boidinii (Yeast).